The following is a 283-amino-acid chain: Protein FAM78A (283 aa).

Belongs to the FAM78 family.

The polypeptide is Protein FAM78A (FAM78A) (Homo sapiens (Human)).